Here is a 154-residue protein sequence, read N- to C-terminus: Large ribosomal subunit protein uL22c (154 aa).

The protein belongs to the universal ribosomal protein uL22 family. Part of the 50S ribosomal subunit.

It is found in the plastid. The protein localises to the chloroplast. Functionally, this protein binds specifically to 23S rRNA. Its function is as follows. The globular domain of the protein is located near the polypeptide exit tunnel on the outside of the subunit, while an extended beta-hairpin is found that lines the wall of the exit tunnel in the center of the 70S ribosome. This chain is Large ribosomal subunit protein uL22c (rpl22), found in Helianthus annuus (Common sunflower).